Here is a 355-residue protein sequence, read N- to C-terminus: F-box only protein 32 (355 aa).

Positions 62–67 (KKRKKD) match the Nuclear localization signal motif. The Nuclear export signal signature appears at 169 to 173 (LLQTL). Residues 223–271 (LTFTDLPLCLQLNIMQRLSDGRDLVSLGQAAPDLHVLSEDRLLWKKLCQ) form the F-box domain. The Bipartite nuclear localization signal signature appears at 280–295 (RKRLILSDKGQLDWKK).

As to quaternary structure, part of the SCF (SKP1-CUL1-F-box) E3 ubiquitin-protein ligase complex SCF(FBXO32) formed of CUL1, SKP1, RBX1 and FBXO32. In terms of tissue distribution, specifically expressed in cardiac and skeletal muscle.

It localises to the cytoplasm. The protein resides in the nucleus. The protein operates within protein modification; protein ubiquitination. Its function is as follows. Substrate recognition component of a SCF (SKP1-CUL1-F-box protein) E3 ubiquitin-protein ligase complex which mediates the ubiquitination and subsequent proteasomal degradation of target proteins. Probably recognizes and binds to phosphorylated target proteins during skeletal muscle atrophy. Recognizes TERF1. The protein is F-box only protein 32 (FBXO32) of Homo sapiens (Human).